Consider the following 182-residue polypeptide: RNA chaperone ProQ (182 aa).

The tract at residues 125–160 (EQRKEQRKDFFKKKAREERNAKTMNKAVKKGSPKKD) is disordered.

This sequence belongs to the ProQ family.

It localises to the cytoplasm. Functionally, RNA chaperone with significant RNA binding, RNA strand exchange and RNA duplexing activities. The protein is RNA chaperone ProQ of Haemophilus ducreyi (strain 35000HP / ATCC 700724).